The sequence spans 524 residues: Cytochrome P450 monooxygenase alt1 (524 aa).

A helical transmembrane segment spans residues 24-44; that stretch reads IANMLSVIAFSICISPIVYFL. A heme-binding site is contributed by Cys469.

The protein belongs to the cytochrome P450 family. Heme is required as a cofactor.

Its subcellular location is the membrane. It functions in the pathway secondary metabolite biosynthesis. Its function is as follows. Cytochrome P450 monooxygenase; part of the gene cluster that mediates the biosynthesis of alternapyrone derivatives. Alternapyrone is a decaketide with octa-methylation from methionine on every C2 unit except the third unit. All the domains in the polyketide synthase alt5 are apparently involved in alternapyrone synthesis, that is, the 8 CMeT, 7 KR, 7 DH, and 4 ER reactions in the 9 KS-mediated condensation steps required for alternapyrone synthesis. the alternapyrone produced by alt5 might be intensively modified by cytochrome P450 monooxygenases alt1, alt2 and alt3 and FAD-dependent oxidoreductase alt4 present in the alt gene cluster. The chain is Cytochrome P450 monooxygenase alt1 from Alternaria solani.